The primary structure comprises 367 residues: tRNA-specific 2-thiouridylase MnmA (367 aa).

Residues 11-18 (AMSGGVDS) and Met-37 contribute to the ATP site. Residues 97 to 99 (NPD) form an interaction with target base in tRNA region. Residue Cys-102 is the Nucleophile of the active site. A disulfide bridge links Cys-102 with Cys-199. Residue Gly-127 participates in ATP binding. Residues 149–151 (KDQ) are interaction with tRNA. Residue Cys-199 is the Cysteine persulfide intermediate of the active site. Residues 311–312 (RY) are interaction with tRNA.

The protein belongs to the MnmA/TRMU family. In terms of assembly, interacts with TusE.

It localises to the cytoplasm. The enzyme catalyses S-sulfanyl-L-cysteinyl-[protein] + uridine(34) in tRNA + AH2 + ATP = 2-thiouridine(34) in tRNA + L-cysteinyl-[protein] + A + AMP + diphosphate + H(+). Its function is as follows. Catalyzes the 2-thiolation of uridine at the wobble position (U34) of tRNA(Lys), tRNA(Glu) and tRNA(Gln), leading to the formation of s(2)U34, the first step of tRNA-mnm(5)s(2)U34 synthesis. Sulfur is provided by IscS, via a sulfur-relay system. Binds ATP and its substrate tRNAs. This is tRNA-specific 2-thiouridylase MnmA from Buchnera aphidicola subsp. Schizaphis graminum (strain Sg).